The following is a 329-amino-acid chain: Malate dehydrogenase (329 aa).

Residue 12-18 coordinates NAD(+); sequence GAAGQIG. Residues arginine 93 and arginine 99 each contribute to the substrate site. Residues asparagine 106, glutamine 113, and 130–132 contribute to the NAD(+) site; that span reads TGN. Residues asparagine 132 and arginine 163 each coordinate substrate. The Proton acceptor role is filled by histidine 188.

The protein belongs to the LDH/MDH superfamily. MDH type 2 family.

The catalysed reaction is (S)-malate + NAD(+) = oxaloacetate + NADH + H(+). Catalyzes the reversible oxidation of malate to oxaloacetate. This Mycobacterium avium (strain 104) protein is Malate dehydrogenase.